The following is a 579-amino-acid chain: Probable N-acetylgalactosaminyltransferase 9 (579 aa).

The Cytoplasmic segment spans residues 1–12 (MLRYIIPRKKGT). The chain crosses the membrane as a helical; Signal-anchor for type II membrane protein span at residues 13–30 (FVIAAFLTVAFFCIVAYH). The Lumenal portion of the chain corresponds to 31–579 (RNDRRRTKFQ…KWNFIDPAKA (549 aa)). The N-linked (GlcNAc...) asparagine glycan is linked to N67. 5 disulfides stabilise this stretch: C123/C356, C347/C427, C464/C483, C507/C520, and C545/C562. Positions 133–243 (LPKTSVIIIF…HGWLEPIVQR (111 aa)) are catalytic subdomain A. Substrate is bound by residues D174 and R204. Residue D227 coordinates Mn(2+). Residue S228 participates in substrate binding. H229 contributes to the Mn(2+) binding site. The interval 302–364 (YIRSPTMAGG…PCSHVGHIFR (63 aa)) is catalytic subdomain B. W333 contacts substrate. Residue H361 coordinates Mn(2+). 3 residues coordinate substrate: R364, H367, and Y369. Residue N370 is glycosylated (N-linked (GlcNAc...) asparagine). The Ricin B-type lectin domain occupies 450–574 (AYGALHTVVS…KDEHQKWNFI (125 aa)).

This sequence belongs to the glycosyltransferase 2 family. GalNAc-T subfamily. Requires Mn(2+) as cofactor.

The protein resides in the golgi apparatus membrane. It participates in protein modification; protein glycosylation. In terms of biological role, probable glycopeptide transferase involved in O-linked oligosaccharide biosynthesis. Glycopeptide transferases catalyze the transfer of an N-acetyl-D-galactosamine residue to an already glycosylated peptide. In contrast to other members of the family, it does not act as a peptide transferase that transfers GalNAc onto serine or threonine residue on peptides that have been tested. Some peptide transferase activity is however not excluded, considering that its appropriate peptide substrate may remain unidentified. In Caenorhabditis elegans, this protein is Probable N-acetylgalactosaminyltransferase 9 (gly-9).